A 437-amino-acid polypeptide reads, in one-letter code: Zinc finger protein 491 (437 aa).

The C2H2-type 1; degenerate zinc finger occupies 35–59 (KSCESGTCGEIFMGYSSFNRNIRTD). Residues 103 to 125 (FDCKECEKSFISPASIRRYMVTH) form a C2H2-type 2; degenerate zinc finger. 11 C2H2-type zinc fingers span residues 131-153 (YKCK…ERTH), 159-181 (YECK…ERTH), 187-209 (YECK…ERTH), 215-237 (YKCK…ERTH), 243-265 (YECK…MRMH), 271-293 (HKCK…ERSH), 299-321 (YKCK…ERTH), 327-349 (DGCK…GRTH), 355-377 (YECK…ERTH), 383-405 (YECK…ERIH), and 411-433 (YQCK…ERTH).

This sequence belongs to the krueppel C2H2-type zinc-finger protein family.

The protein resides in the nucleus. Its function is as follows. May be involved in transcriptional regulation. The protein is Zinc finger protein 491 (ZNF491) of Homo sapiens (Human).